We begin with the raw amino-acid sequence, 365 residues long: Methylthioribose-1-phosphate isomerase (365 aa).

Substrate is bound by residues 53–55 (RGA), Arg90, and Gln201. The active-site Proton donor is Asp242. 252–253 (NK) contributes to the substrate binding site.

The protein belongs to the eIF-2B alpha/beta/delta subunits family. MtnA subfamily.

The enzyme catalyses 5-(methylsulfanyl)-alpha-D-ribose 1-phosphate = 5-(methylsulfanyl)-D-ribulose 1-phosphate. It functions in the pathway amino-acid biosynthesis; L-methionine biosynthesis via salvage pathway; L-methionine from S-methyl-5-thio-alpha-D-ribose 1-phosphate: step 1/6. Functionally, catalyzes the interconversion of methylthioribose-1-phosphate (MTR-1-P) into methylthioribulose-1-phosphate (MTRu-1-P). This is Methylthioribose-1-phosphate isomerase from Methylorubrum populi (strain ATCC BAA-705 / NCIMB 13946 / BJ001) (Methylobacterium populi).